The sequence spans 41 residues: Large ribosomal subunit protein bL36 (41 aa).

It belongs to the bacterial ribosomal protein bL36 family.

This chain is Large ribosomal subunit protein bL36, found in Parvibaculum lavamentivorans (strain DS-1 / DSM 13023 / NCIMB 13966).